The primary structure comprises 406 residues: Flavohemoprotein (406 aa).

The Globin domain maps to 6-144 (VLLDKKTTEI…IADIFISVEK (139 aa)). Histidine 91 lines the heme b pocket. Residues tyrosine 101 and glutamate 143 each act as charge relay system in the active site. The tract at residues 155–406 (GGWTGFRDFK…LFGPLEPIAK (252 aa)) is reductase. An FAD-binding FR-type domain is found at 158 to 267 (TGFRDFKVIK…SAPAGDFILD (110 aa)). Residues tyrosine 196 and 212 to 215 (RQYS) contribute to the FAD site. 280–285 (GVGLTP) is a binding site for NADP(+). 397–400 (LFGP) is a binding site for FAD.

This sequence belongs to the globin family. Two-domain flavohemoproteins subfamily. It in the C-terminal section; belongs to the flavoprotein pyridine nucleotide cytochrome reductase family. Requires heme b as cofactor. FAD is required as a cofactor.

It carries out the reaction 2 nitric oxide + NADPH + 2 O2 = 2 nitrate + NADP(+) + H(+). It catalyses the reaction 2 nitric oxide + NADH + 2 O2 = 2 nitrate + NAD(+) + H(+). Is involved in NO detoxification in an aerobic process, termed nitric oxide dioxygenase (NOD) reaction that utilizes O(2) and NAD(P)H to convert NO to nitrate, which protects the bacterium from various noxious nitrogen compounds. Therefore, plays a central role in the inducible response to nitrosative stress. The protein is Flavohemoprotein of Oceanobacillus iheyensis (strain DSM 14371 / CIP 107618 / JCM 11309 / KCTC 3954 / HTE831).